Reading from the N-terminus, the 118-residue chain is uncharacterized protein (118 aa).

Residues 1-18 (MSKLIFLFVVATLATIKA) form the signal peptide. The N-linked (GlcNAc...) asparagine; by host glycan is linked to Asn-24.

This is an uncharacterized protein from Magallana gigas (Pacific oyster).